The sequence spans 975 residues: 5'-3' exoribonuclease 2 homolog (975 aa).

The CCHC-type zinc-finger motif lies at 262–279; the sequence is RACDLCGQYGHELKECRG. Disordered regions lie at residues 424–443 and 505–532; these read MQMY…GRGQ and SPAD…EGPK. The interval 534–787 is interaction with paxt-1; the sequence is DIRLYESGWK…GICVLYEDPE (254 aa). Residues 804–821 are compositionally biased toward basic and acidic residues; it reads EPEKTLKPDDWNDRRDGR. A disordered region spans residues 804–975; that stretch reads EPEKTLKPDD…GGYHGNSSWR (172 aa). Gly residues-rich tracts occupy residues 850–860, 886–895, and 908–932; these read RGGGGGGGGYR, NYGGRDGGGP, and GYQG…GGGS.

Belongs to the 5'-3' exonuclease family. XRN2/RAT1 subfamily. As to quaternary structure, interacts with paxt-1 (via N-terminus); the interaction is direct and results in stabilization of xrn-2 in the complex. In terms of tissue distribution, expressed in the pharyngeal myoepithelium and intestine. Also expressed in several anterior neurons including the sensory neurons, as well as the interneuron PVT and the pharyngeal motorneuron M5.

Its subcellular location is the nucleus. Its function is as follows. Possesses 5'-&gt;3' exoribonuclease activity. Plays a role in maintenance of steady-state concentration and turnover of microRNAs (miRNA) by degradation of mature miRNA. Degradation role is enhanced when in complex with paxt-1. Partially redundant to xrn-1 in miRNA guide strand degradation. Implicated in differential regulation of mRNAs such as let-7 by controlling the accumulation of mature miRNA. Positively regulates molting of the pharyngeal cuticle. This is 5'-3' exoribonuclease 2 homolog from Caenorhabditis elegans.